A 167-amino-acid polypeptide reads, in one-letter code: Small ribosomal subunit protein uS5 (167 aa).

Positions 12–75 constitute an S5 DRBM domain; that stretch reads LNEKLIAVNR…EKARRNIRDV (64 aa).

Belongs to the universal ribosomal protein uS5 family. Part of the 30S ribosomal subunit. Contacts proteins S4 and S8.

Its function is as follows. With S4 and S12 plays an important role in translational accuracy. Located at the back of the 30S subunit body where it stabilizes the conformation of the head with respect to the body. This Psychromonas ingrahamii (strain DSM 17664 / CCUG 51855 / 37) protein is Small ribosomal subunit protein uS5.